Here is a 509-residue protein sequence, read N- to C-terminus: tRNA (guanine(37)-N(1))-methyltransferase (509 aa).

The transit peptide at 1-57 directs the protein to the mitochondrion; the sequence is MVLWILWRPFGFSRRLLKLERHSITESKSLIPLAWTSLTQTLSESPGIFLLGQRKRF. S-adenosyl-L-methionine is bound by residues H289, 327–328, 355–356, and N387; these read DL and DG. The segment at 478 to 509 is disordered; that stretch reads TKNPENHEDPPLKRQRTAEAFSDEKTQIASNT.

It belongs to the class I-like SAM-binding methyltransferase superfamily. TRM5/TYW2 family. Monomer.

It localises to the mitochondrion matrix. The protein resides in the nucleus. The protein localises to the cytoplasm. The catalysed reaction is guanosine(37) in tRNA + S-adenosyl-L-methionine = N(1)-methylguanosine(37) in tRNA + S-adenosyl-L-homocysteine + H(+). Involved in mitochondrial tRNA methylation. Specifically methylates the N1 position of guanosine-37 in various tRNAs. Methylation is not dependent on the nature of the nucleoside 5' of the target nucleoside. This is the first step in the biosynthesis of wybutosine (yW), a modified base adjacent to the anticodon of tRNAs and required for accurate decoding. The sequence is that of tRNA (guanine(37)-N(1))-methyltransferase from Macaca mulatta (Rhesus macaque).